A 116-amino-acid polypeptide reads, in one-letter code: Putative pterin-4-alpha-carbinolamine dehydratase (116 aa).

It belongs to the pterin-4-alpha-carbinolamine dehydratase family.

The catalysed reaction is (4aS,6R)-4a-hydroxy-L-erythro-5,6,7,8-tetrahydrobiopterin = (6R)-L-erythro-6,7-dihydrobiopterin + H2O. The protein is Putative pterin-4-alpha-carbinolamine dehydratase of Xylella fastidiosa (strain M12).